We begin with the raw amino-acid sequence, 403 residues long: Na(+)-translocating NADH-quinone reductase subunit B (403 aa).

A run of 9 helical transmembrane segments spans residues M56–G76, A121–F141, L164–G184, G225–G245, G260–T280, I287–S307, M312–F332, W348–F368, and G371–V391. Residue T230 is modified to FMN phosphoryl threonine.

Belongs to the NqrB/RnfD family. Composed of six subunits; NqrA, NqrB, NqrC, NqrD, NqrE and NqrF. FMN serves as cofactor.

The protein resides in the cell inner membrane. The enzyme catalyses a ubiquinone + n Na(+)(in) + NADH + H(+) = a ubiquinol + n Na(+)(out) + NAD(+). NQR complex catalyzes the reduction of ubiquinone-1 to ubiquinol by two successive reactions, coupled with the transport of Na(+) ions from the cytoplasm to the periplasm. NqrA to NqrE are probably involved in the second step, the conversion of ubisemiquinone to ubiquinol. The sequence is that of Na(+)-translocating NADH-quinone reductase subunit B from Pseudomonas aeruginosa (strain LESB58).